The following is a 275-amino-acid chain: Phosphate import ATP-binding protein PstB (275 aa).

Residues 29–270 (LEIKDLDLYY…PNKKKTEDYI (242 aa)) enclose the ABC transporter domain. 61-68 (GPSGCGKS) lines the ATP pocket.

It belongs to the ABC transporter superfamily. Phosphate importer (TC 3.A.1.7) family. The complex is composed of two ATP-binding proteins (PstB), two transmembrane proteins (PstC and PstA) and a solute-binding protein (PstS).

It is found in the cell inner membrane. It carries out the reaction phosphate(out) + ATP + H2O = ADP + 2 phosphate(in) + H(+). Part of the ABC transporter complex PstSACB involved in phosphate import. Responsible for energy coupling to the transport system. This Pseudoalteromonas translucida (strain TAC 125) protein is Phosphate import ATP-binding protein PstB.